Here is a 476-residue protein sequence, read N- to C-terminus: Aspartyl/glutamyl-tRNA(Asn/Gln) amidotransferase subunit B (476 aa).

It belongs to the GatB/GatE family. GatB subfamily. As to quaternary structure, heterotrimer of A, B and C subunits.

The catalysed reaction is L-glutamyl-tRNA(Gln) + L-glutamine + ATP + H2O = L-glutaminyl-tRNA(Gln) + L-glutamate + ADP + phosphate + H(+). It carries out the reaction L-aspartyl-tRNA(Asn) + L-glutamine + ATP + H2O = L-asparaginyl-tRNA(Asn) + L-glutamate + ADP + phosphate + 2 H(+). Its function is as follows. Allows the formation of correctly charged Asn-tRNA(Asn) or Gln-tRNA(Gln) through the transamidation of misacylated Asp-tRNA(Asn) or Glu-tRNA(Gln) in organisms which lack either or both of asparaginyl-tRNA or glutaminyl-tRNA synthetases. The reaction takes place in the presence of glutamine and ATP through an activated phospho-Asp-tRNA(Asn) or phospho-Glu-tRNA(Gln). This Clostridium botulinum (strain Alaska E43 / Type E3) protein is Aspartyl/glutamyl-tRNA(Asn/Gln) amidotransferase subunit B.